We begin with the raw amino-acid sequence, 72 residues long: Translation initiation factor IF-1 (72 aa).

An S1-like domain is found at 1-72; that stretch reads MSKEEVLEFS…TKGRITYRYK (72 aa).

It belongs to the IF-1 family. As to quaternary structure, component of the 30S ribosomal translation pre-initiation complex which assembles on the 30S ribosome in the order IF-2 and IF-3, IF-1 and N-formylmethionyl-tRNA(fMet); mRNA recruitment can occur at any time during PIC assembly.

Its subcellular location is the cytoplasm. In terms of biological role, one of the essential components for the initiation of protein synthesis. Stabilizes the binding of IF-2 and IF-3 on the 30S subunit to which N-formylmethionyl-tRNA(fMet) subsequently binds. Helps modulate mRNA selection, yielding the 30S pre-initiation complex (PIC). Upon addition of the 50S ribosomal subunit IF-1, IF-2 and IF-3 are released leaving the mature 70S translation initiation complex. The chain is Translation initiation factor IF-1 from Bartonella tribocorum (strain CIP 105476 / IBS 506).